The chain runs to 348 residues: GTPase Obg (348 aa).

Residues 1 to 159 (MKFLDLAKVY…RTIWLRLKLI (159 aa)) form the Obg domain. Residues 160-327 (ADAGLLGLPN…VLRAVRAEID (168 aa)) enclose the OBG-type G domain. GTP-binding positions include 166–173 (GLPNAGKS), 191–195 (FTTLH), 212–215 (DIPG), 279–282 (NKID), and 308–310 (SSV). Mg(2+) contacts are provided by Ser173 and Thr193.

This sequence belongs to the TRAFAC class OBG-HflX-like GTPase superfamily. OBG GTPase family. In terms of assembly, monomer. Mg(2+) serves as cofactor.

The protein resides in the cytoplasm. An essential GTPase which binds GTP, GDP and possibly (p)ppGpp with moderate affinity, with high nucleotide exchange rates and a fairly low GTP hydrolysis rate. Plays a role in control of the cell cycle, stress response, ribosome biogenesis and in those bacteria that undergo differentiation, in morphogenesis control. This Ruegeria sp. (strain TM1040) (Silicibacter sp.) protein is GTPase Obg.